Here is an 83-residue protein sequence, read N- to C-terminus: Small ribosomal subunit protein bS20 (83 aa).

Belongs to the bacterial ribosomal protein bS20 family.

In terms of biological role, binds directly to 16S ribosomal RNA. The polypeptide is Small ribosomal subunit protein bS20 (Staphylococcus carnosus (strain TM300)).